We begin with the raw amino-acid sequence, 160 residues long: MKRFFLVAIASVLFFFNTMVGSANAVELTESTRTIPLDEAGGTTTLTARQFTNGQKIFVDTCTQCHLQGKTKTNNNVSLGLADLAGAEPRRDNVLALVEFLKNPKSYDGEDDYSELHPNISRPDIYPEMRNYTEDDIFDVAGYTLIAPKLDERWGGTIYF.

A signal peptide spans 1-25 (MKRFFLVAIASVLFFFNTMVGSANA). Residues Cys-62, Cys-65, His-66, and His-117 each contribute to the heme c site.

This sequence belongs to the cytochrome c family. PsbV subfamily. In terms of assembly, PSII is composed of 1 copy each of membrane proteins PsbA, PsbB, PsbC, PsbD, PsbE, PsbF, PsbH, PsbI, PsbJ, PsbK, PsbL, PsbM, PsbT, PsbX, PsbY, PsbZ, Psb30/Ycf12, peripheral proteins PsbO, CyanoQ (PsbQ), PsbU, PsbV and a large number of cofactors. It forms dimeric complexes. The cyanobacterial oxygen-evolving complex is composed of PsbO, CyanoQ (PsbQ), PsbV and PsbU. Requires heme c as cofactor.

It localises to the cellular thylakoid membrane. Its function is as follows. One of the extrinsic, lumenal subunits of photosystem II (PSII). PSII is a light-driven water plastoquinone oxidoreductase, using light energy to abstract electrons from H(2)O, generating a proton gradient subsequently used for ATP formation. The extrinsic proteins stabilize the structure of photosystem II oxygen-evolving complex (OEC), the ion environment of oxygen evolution and protect the OEC against heat-induced inactivation. Low-potential cytochrome c that plays a role in the OEC of PSII, required for normal function or stabilization of PSII. This is Photosystem II extrinsic protein V from Synechocystis sp. (strain ATCC 27184 / PCC 6803 / Kazusa).